Reading from the N-terminus, the 195-residue chain is Cyclin-dependent kinase inhibitor 7 (195 aa).

The segment covering 1 to 11 (MSETKPKRDSE) has biased composition (basic and acidic residues). 3 disordered regions span residues 1 to 50 (MSET…SVSD), 61 to 80 (EEEDDHLSSSISSGCSSSET), and 117 to 154 (SSENLGETAEMDSATTEMRDQRKTEKKKKMEKSPTQAE). 2 stretches are compositionally biased toward low complexity: residues 37–50 (SSSSSSSLAYSVSD) and 68–80 (SSSISSGCSSSET). Phosphothreonine; by KIN10 is present on threonine 151.

Belongs to the CDI family. ICK/KRP subfamily. In terms of assembly, specifically interacts with CDKA-1, but not with CDKB1-1. Interacts with CYCD4-1. Binds to FBL17. Post-translationally, ubiquitinated by SCF(FBL17). Ubiquitination leads to its subsequent degradation, thus controlling cell cycle progression. Expressed in flowers, in developing pollen, and at lower levels in roots and leaves.

It localises to the nucleus. It is found in the nucleoplasm. In terms of biological role, binds and inhibits CYCD2-1/CDKA-1 complex kinase activity. May target specifically CDKA-1. The chain is Cyclin-dependent kinase inhibitor 7 (KRP7) from Arabidopsis thaliana (Mouse-ear cress).